The primary structure comprises 99 residues: DNA-binding protein Fis (99 aa).

The H-T-H motif DNA-binding region spans 75 to 94; sequence QTRAALMLGVNRGTLRKKLK.

It belongs to the transcriptional regulatory Fis family. Homodimer.

In terms of biological role, activates ribosomal RNA transcription. Plays a direct role in upstream activation of rRNA promoters. The sequence is that of DNA-binding protein Fis from Actinobacillus succinogenes (strain ATCC 55618 / DSM 22257 / CCUG 43843 / 130Z).